The primary structure comprises 662 residues: Transketolase (662 aa).

H28 is a binding site for substrate. Thiamine diphosphate-binding positions include H68 and 115–117; that span reads GPL. D156 provides a ligand contact to Mg(2+). Thiamine diphosphate is bound by residues G157 and N186. Mg(2+)-binding residues include N186 and I188. Substrate contacts are provided by H261, R356, and S383. H261 contributes to the thiamine diphosphate binding site. E410 acts as the Proton donor in catalysis. F436 lines the thiamine diphosphate pocket. Substrate is bound by residues H460, D468, and R519.

This sequence belongs to the transketolase family. Homodimer. Mg(2+) serves as cofactor. Requires Ca(2+) as cofactor. Mn(2+) is required as a cofactor. The cofactor is Co(2+). It depends on thiamine diphosphate as a cofactor.

It carries out the reaction D-sedoheptulose 7-phosphate + D-glyceraldehyde 3-phosphate = aldehydo-D-ribose 5-phosphate + D-xylulose 5-phosphate. The protein operates within carbohydrate biosynthesis; Calvin cycle. Its pathway is carbohydrate degradation; pentose phosphate pathway. Functionally, catalyzes the transfer of a two-carbon ketol group from a ketose donor to an aldose acceptor, via a covalent intermediate with the cofactor thiamine pyrophosphate. The protein is Transketolase (tkt) of Staphylococcus aureus (strain COL).